The chain runs to 361 residues: Phospho-N-acetylmuramoyl-pentapeptide-transferase (361 aa).

11 helical membrane-spanning segments follow: residues 10 to 30 (PGTG…ACLI), 40 to 60 (LSLP…IGVP), 84 to 104 (GTPT…GSLV), 107 to 127 (GDPR…IGGI), 147 to 167 (LLLQ…HGAI), 175 to 195 (WGWL…VFLA), 206 to 226 (LDGL…LQLM), 232 to 252 (GDPA…GFLL), 260 to 280 (VFMG…IALL), 288 to 308 (LLMG…VWVF), and 341 to 361 (VVVS…VLVP).

This sequence belongs to the glycosyltransferase 4 family. MraY subfamily. Mg(2+) is required as a cofactor.

It is found in the cell inner membrane. The catalysed reaction is UDP-N-acetyl-alpha-D-muramoyl-L-alanyl-gamma-D-glutamyl-meso-2,6-diaminopimeloyl-D-alanyl-D-alanine + di-trans,octa-cis-undecaprenyl phosphate = di-trans,octa-cis-undecaprenyl diphospho-N-acetyl-alpha-D-muramoyl-L-alanyl-D-glutamyl-meso-2,6-diaminopimeloyl-D-alanyl-D-alanine + UMP. It participates in cell wall biogenesis; peptidoglycan biosynthesis. Catalyzes the initial step of the lipid cycle reactions in the biosynthesis of the cell wall peptidoglycan: transfers peptidoglycan precursor phospho-MurNAc-pentapeptide from UDP-MurNAc-pentapeptide onto the lipid carrier undecaprenyl phosphate, yielding undecaprenyl-pyrophosphoryl-MurNAc-pentapeptide, known as lipid I. The chain is Phospho-N-acetylmuramoyl-pentapeptide-transferase from Synechococcus sp. (strain RCC307).